The following is a 385-amino-acid chain: 3-hydroxyisobutyryl-CoA hydrolase, mitochondrial (385 aa).

Substrate contacts are provided by E120, G145, E168, and D176.

This sequence belongs to the enoyl-CoA hydratase/isomerase family.

The protein resides in the mitochondrion. It catalyses the reaction 3-hydroxy-2-methylpropanoyl-CoA + H2O = 3-hydroxy-2-methylpropanoate + CoA + H(+). It participates in amino-acid degradation; L-valine degradation. Hydrolyzes 3-hydroxyisobutyryl-CoA (HIBYL-CoA), a saline catabolite. Has high activity toward isobutyryl-CoA. Could be an isobutyryl-CoA dehydrogenase that functions in valine catabolism. Also hydrolyzes 3-hydroxypropanoyl-CoA. The protein is 3-hydroxyisobutyryl-CoA hydrolase, mitochondrial (hibch) of Xenopus laevis (African clawed frog).